Consider the following 254-residue polypeptide: Probable pectate lyase E (254 aa).

A signal peptide spans Met-1 to Ala-17. Asn-175 is a glycosylation site (N-linked (GlcNAc...) asparagine). The tract at residues Asp-228–Cys-254 is disordered.

Belongs to the polysaccharide lyase 3 family. Ca(2+) is required as a cofactor.

Its subcellular location is the secreted. The catalysed reaction is Eliminative cleavage of (1-&gt;4)-alpha-D-galacturonan to give oligosaccharides with 4-deoxy-alpha-D-galact-4-enuronosyl groups at their non-reducing ends.. In terms of biological role, pectinolytic enzyme consist of four classes of enzymes: pectin lyase, polygalacturonase, pectin methylesterase and rhamnogalacturonase. Among pectinolytic enzymes, pectin lyase is the most important in depolymerization of pectin, since it cleaves internal glycosidic bonds of highly methylated pectins. Favors pectate, the anion, over pectin, the methyl ester. The protein is Probable pectate lyase E (plyE) of Aspergillus fumigatus (strain ATCC MYA-4609 / CBS 101355 / FGSC A1100 / Af293) (Neosartorya fumigata).